The chain runs to 184 residues: UPF0149 protein PSPTO_5224 (184 aa).

This sequence belongs to the UPF0149 family.

This chain is UPF0149 protein PSPTO_5224, found in Pseudomonas syringae pv. tomato (strain ATCC BAA-871 / DC3000).